The primary structure comprises 258 residues: Tryptophan synthase alpha chain (258 aa).

Catalysis depends on proton acceptor residues Glu-52 and Asp-63.

This sequence belongs to the TrpA family. As to quaternary structure, tetramer of two alpha and two beta chains.

It catalyses the reaction (1S,2R)-1-C-(indol-3-yl)glycerol 3-phosphate + L-serine = D-glyceraldehyde 3-phosphate + L-tryptophan + H2O. It functions in the pathway amino-acid biosynthesis; L-tryptophan biosynthesis; L-tryptophan from chorismate: step 5/5. In terms of biological role, the alpha subunit is responsible for the aldol cleavage of indoleglycerol phosphate to indole and glyceraldehyde 3-phosphate. The chain is Tryptophan synthase alpha chain from Streptococcus pneumoniae (strain Taiwan19F-14).